A 437-amino-acid polypeptide reads, in one-letter code: Branched-chain amino acid transport system 3 carrier protein (437 aa).

12 consecutive transmembrane segments (helical) span residues 9 to 29 (ILALGFMTFALFVGAGNIIFP), 40 to 60 (VWLAALGFLITAVGLPVITVI), 79 to 99 (YAGGLLAAVCYLAVGPLFAIP), 120 to 140 (ALFVYSLAYFLLALAISLYPG), 155 to 175 (ILALAILGVAAFLWPAGPIGT), 189 to 209 (FVNGYLTMDTLAALVFGIVIV), 226 to 246 (YAIVAGLIAGVGLVLVYVSLF), 277 to 297 (LGSSFLAGLIALACLVTAVGL), 316 to 336 (LVIILAGFSFIVSNLGLTKLI), 342 to 362 (VLTAIYPPCIVLVALSFCIGL), 369 to 389 (ILAPVMLVSLAFGVLDALKAA), and 399 to 419 (LLHLPLAEQGLAWLIPSVATL).

The protein belongs to the branched chain amino acid transporter family.

The protein resides in the cell inner membrane. Functionally, component of the LIV-III transport system for branched-chain amino acids. BraZ is specific for isoleucine and valine. The LIV-III transport system may be H(+)-coupled. The polypeptide is Branched-chain amino acid transport system 3 carrier protein (braZ) (Pseudomonas aeruginosa (strain ATCC 15692 / DSM 22644 / CIP 104116 / JCM 14847 / LMG 12228 / 1C / PRS 101 / PAO1)).